Consider the following 96-residue polypeptide: Large ribosomal subunit protein bL28 (96 aa).

This sequence belongs to the bacterial ribosomal protein bL28 family.

The protein is Large ribosomal subunit protein bL28 of Methylocella silvestris (strain DSM 15510 / CIP 108128 / LMG 27833 / NCIMB 13906 / BL2).